A 485-amino-acid chain; its full sequence is Inosine-5'-monophosphate dehydrogenase (485 aa).

CBS domains are found at residues 99–154 (IVED…LVKE) and 156–215 (MTKD…VRDE). Residues D247 and 294 to 296 (GIG) each bind NAD(+). K(+) is bound by residues G296 and G298. IMP is bound at residue S299. C301 lines the K(+) pocket. C301 serves as the catalytic Thioimidate intermediate. IMP contacts are provided by residues 334–336 (DGG), 357–358 (GN), and 381–385 (YRGMG). The active-site Proton acceptor is R397. An IMP-binding site is contributed by E412. K(+) contacts are provided by E466, S467, and H468.

Belongs to the IMPDH/GMPR family. As to quaternary structure, homotetramer. It depends on K(+) as a cofactor.

It catalyses the reaction IMP + NAD(+) + H2O = XMP + NADH + H(+). The protein operates within purine metabolism; XMP biosynthesis via de novo pathway; XMP from IMP: step 1/1. With respect to regulation, mycophenolic acid (MPA) is a non-competitive inhibitor that prevents formation of the closed enzyme conformation by binding to the same site as the amobile flap. In contrast, mizoribine monophosphate (MZP) is a competitive inhibitor that induces the closed conformation. MPA is a potent inhibitor of mammalian IMPDHs but a poor inhibitor of the bacterial enzymes. MZP is a more potent inhibitor of bacterial IMPDH. In terms of biological role, catalyzes the conversion of inosine 5'-phosphate (IMP) to xanthosine 5'-phosphate (XMP), the first committed and rate-limiting step in the de novo synthesis of guanine nucleotides, and therefore plays an important role in the regulation of cell growth. The polypeptide is Inosine-5'-monophosphate dehydrogenase (Pyrococcus abyssi (strain GE5 / Orsay)).